The chain runs to 251 residues: Hydroxyacylglutathione hydrolase (251 aa).

Zn(2+) is bound by residues His53, His55, Asp57, His58, His110, Asp127, and His165.

The protein belongs to the metallo-beta-lactamase superfamily. Glyoxalase II family. As to quaternary structure, monomer. Requires Zn(2+) as cofactor.

It carries out the reaction an S-(2-hydroxyacyl)glutathione + H2O = a 2-hydroxy carboxylate + glutathione + H(+). Its pathway is secondary metabolite metabolism; methylglyoxal degradation; (R)-lactate from methylglyoxal: step 2/2. Its function is as follows. Thiolesterase that catalyzes the hydrolysis of S-D-lactoyl-glutathione to form glutathione and D-lactic acid. The polypeptide is Hydroxyacylglutathione hydrolase (Yersinia enterocolitica serotype O:8 / biotype 1B (strain NCTC 13174 / 8081)).